Reading from the N-terminus, the 1098-residue chain is Protein translocase subunit SecA (1098 aa).

ATP is bound by residues Q176, 194 to 198, and D696; that span reads GEGKT. The interval 1024–1098 is disordered; that stretch reads EPEQVREAAP…KYKNCHGQNA (75 aa). Composition is skewed to basic and acidic residues over residues 1041–1051 and 1058–1077; these read QYREEKQDLSD and AEHDTREVKREPVRAEKTVG. Zn(2+) contacts are provided by C1082, C1084, C1093, and H1094.

It belongs to the SecA family. As to quaternary structure, monomer and homodimer. Part of the essential Sec protein translocation apparatus which comprises SecA, SecYEG and auxiliary proteins SecDF. Other proteins may also be involved. The cofactor is Zn(2+).

The protein resides in the cell inner membrane. The protein localises to the cytoplasm. It catalyses the reaction ATP + H2O + cellular proteinSide 1 = ADP + phosphate + cellular proteinSide 2.. Part of the Sec protein translocase complex. Interacts with the SecYEG preprotein conducting channel. Has a central role in coupling the hydrolysis of ATP to the transfer of proteins into and across the cell membrane, serving as an ATP-driven molecular motor driving the stepwise translocation of polypeptide chains across the membrane. This Phocaeicola vulgatus (strain ATCC 8482 / DSM 1447 / JCM 5826 / CCUG 4940 / NBRC 14291 / NCTC 11154) (Bacteroides vulgatus) protein is Protein translocase subunit SecA.